The following is a 505-amino-acid chain: uncharacterized protein (505 aa).

A signal peptide spans 1–22 (MAILKSALVGFICFLHFFIVNA). Residues asparagine 25 and asparagine 114 are each glycosylated (N-linked (GlcNAc...) asparagine). Transmembrane regions (helical) follow at residues 181–201 (LFLN…WSFI), 216–236 (ISGV…YFYF), 266–286 (FLLL…GSLL), 291–311 (ILAG…FISP), and 318–338 (VILF…LWIV). Residue asparagine 342 is glycosylated (N-linked (GlcNAc...) asparagine). A run of 2 helical transmembrane segments spans residues 365–385 (IVIC…AILI) and 400–420 (LLWF…MLTI). N-linked (GlcNAc...) asparagine glycosylation is present at asparagine 454.

It belongs to the LU7TM family.

The protein resides in the membrane. This is an uncharacterized protein from Schizosaccharomyces pombe (strain 972 / ATCC 24843) (Fission yeast).